Reading from the N-terminus, the 1486-residue chain is Chromosome partition protein MukB (1486 aa).

Position 34–41 (34–41 (GGNGAGKS)) interacts with ATP. Coiled-coil stretches lie at residues 326–418 (LEAD…QYNQ), 444–480 (LETFQAKELEATEKMLSLEQKMSMAQTAHSQFEQAYQ), and 509–603 (RHLA…RAPV). The segment at 666-783 (PGGSEDQRLN…EVPLFGRAAR (118 aa)) is flexible hinge. Coiled-coil stretches lie at residues 835 to 923 (EAEI…AKLE), 977 to 1115 (EMLS…TAKA), and 1209 to 1266 (VEAI…QNVS).

This sequence belongs to the SMC family. MukB subfamily. In terms of assembly, homodimerization via its hinge domain. Binds to DNA via its C-terminal region. Interacts, and probably forms a ternary complex, with MukE and MukF via its C-terminal region. The complex formation is stimulated by calcium or magnesium. Interacts with tubulin-related protein FtsZ.

Its subcellular location is the cytoplasm. It is found in the nucleoid. In terms of biological role, plays a central role in chromosome condensation, segregation and cell cycle progression. Functions as a homodimer, which is essential for chromosome partition. Involved in negative DNA supercoiling in vivo, and by this means organize and compact chromosomes. May achieve or facilitate chromosome segregation by condensation DNA from both sides of a centrally located replisome during cell division. This is Chromosome partition protein MukB from Shigella boydii serotype 18 (strain CDC 3083-94 / BS512).